The primary structure comprises 111 residues: Phosphoribosyl-ATP pyrophosphatase (111 aa).

Belongs to the PRA-PH family.

It localises to the cytoplasm. The catalysed reaction is 1-(5-phospho-beta-D-ribosyl)-ATP + H2O = 1-(5-phospho-beta-D-ribosyl)-5'-AMP + diphosphate + H(+). Its pathway is amino-acid biosynthesis; L-histidine biosynthesis; L-histidine from 5-phospho-alpha-D-ribose 1-diphosphate: step 2/9. This chain is Phosphoribosyl-ATP pyrophosphatase (hisE), found in Pseudomonas aeruginosa (strain ATCC 15692 / DSM 22644 / CIP 104116 / JCM 14847 / LMG 12228 / 1C / PRS 101 / PAO1).